The following is a 527-amino-acid chain: Glutamate--cysteine ligase (527 aa).

Belongs to the glutamate--cysteine ligase type 1 family. Type 1 subfamily.

It carries out the reaction L-cysteine + L-glutamate + ATP = gamma-L-glutamyl-L-cysteine + ADP + phosphate + H(+). It participates in sulfur metabolism; glutathione biosynthesis; glutathione from L-cysteine and L-glutamate: step 1/2. The chain is Glutamate--cysteine ligase from Pseudomonas aeruginosa (strain LESB58).